A 240-amino-acid chain; its full sequence is Dihydromonapterin reductase (240 aa).

Catalysis depends on tyrosine 152, which acts as the Proton acceptor.

The protein belongs to the short-chain dehydrogenases/reductases (SDR) family. FolM subfamily.

It catalyses the reaction (6S)-5,6,7,8-tetrahydrofolate + NADP(+) = 7,8-dihydrofolate + NADPH + H(+). It carries out the reaction 7,8-dihydromonapterin + NADPH + H(+) = 5,6,7,8-tetrahydromonapterin + NADP(+). Its function is as follows. Catalyzes the reduction of dihydromonapterin to tetrahydromonapterin. Also has lower activity with dihydrofolate. The chain is Dihydromonapterin reductase (folM) from Citrobacter koseri (strain ATCC BAA-895 / CDC 4225-83 / SGSC4696).